The following is a 256-amino-acid chain: Thiazole synthase (256 aa).

Lys-95 (schiff-base intermediate with DXP) is an active-site residue. Residues Gly-156, Ala-182–Gly-183, and Asn-204–Thr-205 each bind 1-deoxy-D-xylulose 5-phosphate.

This sequence belongs to the ThiG family. As to quaternary structure, homotetramer. Forms heterodimers with either ThiH or ThiS.

The protein resides in the cytoplasm. The catalysed reaction is [ThiS sulfur-carrier protein]-C-terminal-Gly-aminoethanethioate + 2-iminoacetate + 1-deoxy-D-xylulose 5-phosphate = [ThiS sulfur-carrier protein]-C-terminal Gly-Gly + 2-[(2R,5Z)-2-carboxy-4-methylthiazol-5(2H)-ylidene]ethyl phosphate + 2 H2O + H(+). It participates in cofactor biosynthesis; thiamine diphosphate biosynthesis. Its function is as follows. Catalyzes the rearrangement of 1-deoxy-D-xylulose 5-phosphate (DXP) to produce the thiazole phosphate moiety of thiamine. Sulfur is provided by the thiocarboxylate moiety of the carrier protein ThiS. In vitro, sulfur can be provided by H(2)S. This Escherichia coli O81 (strain ED1a) protein is Thiazole synthase.